A 203-amino-acid polypeptide reads, in one-letter code: MAVIKGITPEQIAQICVGQYAGVDEVGRGPLIGNVVTAAVILDPNNPIEGLNDSKKLSEKKRELLFEQIQQKALSVSVGSATPAEIDELNILHATMLAMQRAVAGLNIKPSSVLVDGNRTPDFGVESHAIIKGDGLIDAISAASIIAKVVRDREMDALALLYPEYGFEKHKGYPTKAHFEALAQHGVLPEHRKSFRPVREALA.

Positions 18–203 constitute an RNase H type-2 domain; the sequence is GQYAGVDEVG…SFRPVREALA (186 aa). Residues D24, E25, and D116 each coordinate a divalent metal cation.

Belongs to the RNase HII family. Mn(2+) serves as cofactor. It depends on Mg(2+) as a cofactor.

Its subcellular location is the cytoplasm. It catalyses the reaction Endonucleolytic cleavage to 5'-phosphomonoester.. In terms of biological role, endonuclease that specifically degrades the RNA of RNA-DNA hybrids. The protein is Ribonuclease HII of Shewanella pealeana (strain ATCC 700345 / ANG-SQ1).